We begin with the raw amino-acid sequence, 234 residues long: Large ribosomal subunit protein uL1 (234 aa).

The protein belongs to the universal ribosomal protein uL1 family. In terms of assembly, part of the 50S ribosomal subunit.

Functionally, binds directly to 23S rRNA. The L1 stalk is quite mobile in the ribosome, and is involved in E site tRNA release. Protein L1 is also a translational repressor protein, it controls the translation of the L11 operon by binding to its mRNA. This chain is Large ribosomal subunit protein uL1, found in Salmonella agona (strain SL483).